The following is a 257-amino-acid chain: Snake venom serine protease rhinocerase 4 (257 aa).

A signal peptide spans Val-1–Ala-17. Positions Gln-18–Leu-23 are excised as a propeptide. The 225-residue stretch at Val-24–Gly-248 folds into the Peptidase S1 domain. Intrachain disulfides connect Cys-30-Cys-162, Cys-49-Cys-65, Cys-97-Cys-255, Cys-141-Cys-209, Cys-173-Cys-188, and Cys-199-Cys-224. The N-linked (GlcNAc...) asparagine glycan is linked to Asn-43. The Charge relay system role is filled by His-64. Asn-78 and Asn-100 each carry an N-linked (GlcNAc...) asparagine glycan. The active-site Charge relay system is the Asp-109. Residue Ser-203 is the Charge relay system of the active site. Asn-250 is a glycosylation site (N-linked (GlcNAc...) asparagine).

It belongs to the peptidase S1 family. Snake venom subfamily. As to expression, expressed by the venom gland.

The protein localises to the secreted. In terms of biological role, snake venom serine protease that may act in the hemostasis system of the prey. The protein is Snake venom serine protease rhinocerase 4 of Bitis rhinoceros (West African gaboon viper).